The primary structure comprises 246 residues: MTKLFIADLHLSESRPDLIQAFIHFLETEARTADELYILGDLFEFWIGDDEQSPLQQQITHALRTLANHGCQLFYSHGNRDFMIGKRFAQECGMTLLPPVYPCELAGEKALLLHGDQLCTDDEAYQRFRRITSWPWLQWIFLHLPLSRRVKIAQQIRQGSHKGKQQKSRSIMDVTPQSVITCFEQHKATLMIHGHTHRPQIHDVTLSSNQPARRIVLGDWDTDLWYLKIDDRDINLISQPINTAKN.

The Mn(2+) site is built by Asp-8, His-10, Asp-41, Asn-79, and His-114. Substrate is bound at residue 79–80 (NR). The substrate site is built by Asp-122, Ser-160, Lys-164, Lys-167, and His-195. Mn(2+) is bound by residues His-195 and His-197.

It belongs to the LpxH family. Mn(2+) is required as a cofactor.

It localises to the cell inner membrane. The catalysed reaction is UDP-2-N,3-O-bis[(3R)-3-hydroxytetradecanoyl]-alpha-D-glucosamine + H2O = 2-N,3-O-bis[(3R)-3-hydroxytetradecanoyl]-alpha-D-glucosaminyl 1-phosphate + UMP + 2 H(+). It participates in glycolipid biosynthesis; lipid IV(A) biosynthesis; lipid IV(A) from (3R)-3-hydroxytetradecanoyl-[acyl-carrier-protein] and UDP-N-acetyl-alpha-D-glucosamine: step 4/6. Functionally, hydrolyzes the pyrophosphate bond of UDP-2,3-diacylglucosamine to yield 2,3-diacylglucosamine 1-phosphate (lipid X) and UMP by catalyzing the attack of water at the alpha-P atom. Involved in the biosynthesis of lipid A, a phosphorylated glycolipid that anchors the lipopolysaccharide to the outer membrane of the cell. This Tolumonas auensis (strain DSM 9187 / NBRC 110442 / TA 4) protein is UDP-2,3-diacylglucosamine hydrolase.